A 185-amino-acid polypeptide reads, in one-letter code: Putative manganese efflux pump MntP (185 aa).

6 consecutive transmembrane segments (helical) span residues 3-23, 40-60, 64-84, 102-122, 124-144, and 165-185; these read IFTLLMIAAGLSMDNFAVSLA, LLFVAAHLVMFSLGWFGVSVI, FDAYDHWISFGLLVFIGLRMI, TFSRLLLIALATSMDALAVGI, LSLAGVHFVLSVAAISFFVLI, and EIFGGIVLIGIALKILLDAMM.

The protein belongs to the MntP (TC 9.B.29) family.

Its subcellular location is the cell inner membrane. In terms of biological role, probably functions as a manganese efflux pump. This chain is Putative manganese efflux pump MntP, found in Elusimicrobium minutum (strain Pei191).